The chain runs to 116 residues: Large ribosomal subunit protein bL19 (116 aa).

This sequence belongs to the bacterial ribosomal protein bL19 family.

This protein is located at the 30S-50S ribosomal subunit interface and may play a role in the structure and function of the aminoacyl-tRNA binding site. This Pasteurella multocida (strain Pm70) protein is Large ribosomal subunit protein bL19.